A 492-amino-acid polypeptide reads, in one-letter code: Ketol-acid reductoisomerase (NADP(+)) (492 aa).

In terms of domain architecture, KARI N-terminal Rossmann spans 15-208; the sequence is AQLGKCRFMA…GAHRAGVLES (194 aa). NADP(+)-binding positions include 45–48, Arg68, Arg76, Ser78, and 108–110; these read CGAQ and DKQ. Residue His132 is part of the active site. Gly158 contributes to the NADP(+) binding site. KARI C-terminal knotted domains lie at 209–344 and 345–485; these read SFVA…NSPE and YDGK…MTDM. Residues Asp217, Glu221, Glu389, and Glu393 each coordinate Mg(2+). A substrate-binding site is contributed by Ser414.

This sequence belongs to the ketol-acid reductoisomerase family. Mg(2+) serves as cofactor.

The enzyme catalyses (2R)-2,3-dihydroxy-3-methylbutanoate + NADP(+) = (2S)-2-acetolactate + NADPH + H(+). It catalyses the reaction (2R,3R)-2,3-dihydroxy-3-methylpentanoate + NADP(+) = (S)-2-ethyl-2-hydroxy-3-oxobutanoate + NADPH + H(+). It functions in the pathway amino-acid biosynthesis; L-isoleucine biosynthesis; L-isoleucine from 2-oxobutanoate: step 2/4. It participates in amino-acid biosynthesis; L-valine biosynthesis; L-valine from pyruvate: step 2/4. Its function is as follows. Involved in the biosynthesis of branched-chain amino acids (BCAA). Catalyzes an alkyl-migration followed by a ketol-acid reduction of (S)-2-acetolactate (S2AL) to yield (R)-2,3-dihydroxy-isovalerate. In the isomerase reaction, S2AL is rearranged via a Mg-dependent methyl migration to produce 3-hydroxy-3-methyl-2-ketobutyrate (HMKB). In the reductase reaction, this 2-ketoacid undergoes a metal-dependent reduction by NADPH to yield (R)-2,3-dihydroxy-isovalerate. This chain is Ketol-acid reductoisomerase (NADP(+)), found in Photorhabdus laumondii subsp. laumondii (strain DSM 15139 / CIP 105565 / TT01) (Photorhabdus luminescens subsp. laumondii).